Here is a 371-residue protein sequence, read N- to C-terminus: Lipoyl synthase, mitochondrial (371 aa).

The N-terminal 24 residues, 1-24 (MLSRFKCSRLQLQKRAISVTKATT), are a transit peptide targeting the mitochondrion. Residues 20–29 (TKATTTTASQ) are compositionally biased toward polar residues. Positions 20–42 (TKATTTTASQPKRRRTTTFSDAL) are disordered. [4Fe-4S] cluster contacts are provided by Cys107, Cys112, Cys118, Cys138, Cys142, Cys145, and Ser353. Positions 121–342 (GGDSSKATAT…RDKALELGFL (222 aa)) constitute a Radical SAM core domain.

Belongs to the radical SAM superfamily. Lipoyl synthase family. It depends on [4Fe-4S] cluster as a cofactor.

The protein localises to the mitochondrion. The catalysed reaction is [[Fe-S] cluster scaffold protein carrying a second [4Fe-4S](2+) cluster] + N(6)-octanoyl-L-lysyl-[protein] + 2 oxidized [2Fe-2S]-[ferredoxin] + 2 S-adenosyl-L-methionine + 4 H(+) = [[Fe-S] cluster scaffold protein] + N(6)-[(R)-dihydrolipoyl]-L-lysyl-[protein] + 4 Fe(3+) + 2 hydrogen sulfide + 2 5'-deoxyadenosine + 2 L-methionine + 2 reduced [2Fe-2S]-[ferredoxin]. The protein operates within protein modification; protein lipoylation via endogenous pathway; protein N(6)-(lipoyl)lysine from octanoyl-[acyl-carrier-protein]: step 2/2. Its function is as follows. Catalyzes the radical-mediated insertion of two sulfur atoms into the C-6 and C-8 positions of the octanoyl moiety bound to the lipoyl domains of lipoate-dependent enzymes, thereby converting the octanoylated domains into lipoylated derivatives. The chain is Lipoyl synthase, mitochondrial from Lachancea thermotolerans (strain ATCC 56472 / CBS 6340 / NRRL Y-8284) (Yeast).